A 488-amino-acid polypeptide reads, in one-letter code: TOX high mobility group box family member 2 (488 aa).

The interval 76–114 (YEIPPITPPNLPEPSLLHLGDHEASYHSLCHGLTPNGLL) is required for transcriptional activation. Disordered regions lie at residues 192-258 (RSSI…PQKP), 293-328 (WDSLGEEQKQSSPDQGETKSTQANPPAKMLPPKQPM), and 363-473 (SLLP…ECGI). A compositionally biased stretch (low complexity) spans 204–216 (GSKSATPSPSSST). Residues 222 to 239 (EVHFKISGEKRPSADPGK) are compositionally biased toward basic and acidic residues. The Nuclear localization signal motif lies at 223–252 (VHFKISGEKRPSADPGKKAKNPKKKKKKDP). Basic residues predominate over residues 240 to 250 (KAKNPKKKKKK). Residues 255–323 (PQKPVSAYAL…QANPPAKMLP (69 aa)) constitute a DNA-binding region (HMG box). Residues 302–316 (QSSPDQGETKSTQAN) are compositionally biased toward polar residues. Positions 443 to 460 (PSSSGSCSPGPSNPTSSG) are enriched in low complexity.

Its subcellular location is the nucleus. In terms of biological role, putative transcriptional activator involved in the hypothalamo-pituitary-gonadal system. This chain is TOX high mobility group box family member 2 (TOX2), found in Homo sapiens (Human).